Consider the following 663-residue polypeptide: UvrABC system protein B (663 aa).

The 388-residue stretch at 30-417 (DGIKAGKRHQ…TDKMVEQIIR (388 aa)) folds into the Helicase ATP-binding domain. 43 to 50 (GATGTGKT) is a binding site for ATP. The Beta-hairpin motif lies at 96–119 (YYDYYQPEAYVPSTDTFIEKDASI). Residues 434 to 600 (QIDDLLSEIQ…TINKKIHDLI (167 aa)) form the Helicase C-terminal domain. Residues 627-662 (QKTIDNIEKEMKQAAKDLDFEKATELRDMLFELKAE) form the UVR domain.

It belongs to the UvrB family. In terms of assembly, forms a heterotetramer with UvrA during the search for lesions. Interacts with UvrC in an incision complex.

It localises to the cytoplasm. The UvrABC repair system catalyzes the recognition and processing of DNA lesions. A damage recognition complex composed of 2 UvrA and 2 UvrB subunits scans DNA for abnormalities. Upon binding of the UvrA(2)B(2) complex to a putative damaged site, the DNA wraps around one UvrB monomer. DNA wrap is dependent on ATP binding by UvrB and probably causes local melting of the DNA helix, facilitating insertion of UvrB beta-hairpin between the DNA strands. Then UvrB probes one DNA strand for the presence of a lesion. If a lesion is found the UvrA subunits dissociate and the UvrB-DNA preincision complex is formed. This complex is subsequently bound by UvrC and the second UvrB is released. If no lesion is found, the DNA wraps around the other UvrB subunit that will check the other stand for damage. This is UvrABC system protein B from Staphylococcus aureus (strain Mu50 / ATCC 700699).